Reading from the N-terminus, the 390-residue chain is Mannitol-1-phosphate 5-dehydrogenase (390 aa).

Residue 3–14 (ALHFGAGNIGRG) participates in NAD(+) binding.

The protein belongs to the mannitol dehydrogenase family.

It catalyses the reaction D-mannitol 1-phosphate + NAD(+) = beta-D-fructose 6-phosphate + NADH + H(+). In Buchnera aphidicola subsp. Baizongia pistaciae (strain Bp), this protein is Mannitol-1-phosphate 5-dehydrogenase.